We begin with the raw amino-acid sequence, 363 residues long: 5-formaminoimidazole-4-carboxamide-1-(beta)-D-ribofuranosyl 5'-monophosphate synthetase (363 aa).

2 residues coordinate 5-amino-1-(5-phospho-beta-D-ribosyl)imidazole-4-carboxamide: His29 and Ser96. One can recognise an ATP-grasp domain in the interval 118–350 (RDILRWESER…MGRRVAREIR (233 aa)). Residues 148 to 210 (PEEI…TNFC) and Glu232 each bind ATP. Asn260 lines the 5-amino-1-(5-phospho-beta-D-ribosyl)imidazole-4-carboxamide pocket. Gln299 and Glu312 together coordinate Mg(2+).

The protein belongs to the phosphohexose mutase family. Mg(2+) is required as a cofactor. Requires Mn(2+) as cofactor.

It catalyses the reaction 5-amino-1-(5-phospho-beta-D-ribosyl)imidazole-4-carboxamide + formate + ATP = 5-formamido-1-(5-phospho-D-ribosyl)imidazole-4-carboxamide + ADP + phosphate. The protein operates within purine metabolism; IMP biosynthesis via de novo pathway; 5-formamido-1-(5-phospho-D-ribosyl)imidazole-4-carboxamide from 5-amino-1-(5-phospho-D-ribosyl)imidazole-4-carboxamide (formate route): step 1/1. Its function is as follows. Catalyzes the ATP- and formate-dependent formylation of 5-aminoimidazole-4-carboxamide-1-beta-d-ribofuranosyl 5'-monophosphate (AICAR) to 5-formaminoimidazole-4-carboxamide-1-beta-d-ribofuranosyl 5'-monophosphate (FAICAR) in the absence of folates. The chain is 5-formaminoimidazole-4-carboxamide-1-(beta)-D-ribofuranosyl 5'-monophosphate synthetase from Methanothermobacter thermautotrophicus (strain ATCC 29096 / DSM 1053 / JCM 10044 / NBRC 100330 / Delta H) (Methanobacterium thermoautotrophicum).